A 172-amino-acid polypeptide reads, in one-letter code: Small ribosomal subunit protein uS5 (172 aa).

Positions 17 to 80 constitute an S5 DRBM domain; it reads LREKMISVNR…EQARRNMFKV (64 aa).

The protein belongs to the universal ribosomal protein uS5 family. As to quaternary structure, part of the 30S ribosomal subunit. Contacts proteins S4 and S8.

With S4 and S12 plays an important role in translational accuracy. Its function is as follows. Located at the back of the 30S subunit body where it stabilizes the conformation of the head with respect to the body. The sequence is that of Small ribosomal subunit protein uS5 from Paraburkholderia phytofirmans (strain DSM 17436 / LMG 22146 / PsJN) (Burkholderia phytofirmans).